Here is an 853-residue protein sequence, read N- to C-terminus: Transcription factor CPH2 (853 aa).

Disordered stretches follow at residues 165 to 209 and 296 to 353; these read EPPI…DKNS and NMNP…VHHP. The span at 180-194 shows a compositional bias: low complexity; the sequence is TTTVSSTNSITNTTK. Positions 205-274 constitute a bHLH domain; the sequence is KDKNSHNMIE…TKATEYIKHL (70 aa). Residues 301–315 show a composition bias toward pro residues; the sequence is SLPPPPQQMQAPPQP. The segment covering 330-352 has biased composition (low complexity); it reads TPASQYPSPQQQVSPTQQQTVHH.

It is found in the nucleus. In terms of biological role, transcription factor that positively controls filamentous growth, virulence, and invasiveness. Binds directly to the two SRE-1-like elements upstream of TEC1 and thus positively regulates expression of this important hyphal growth regulator. Functions independently of known signaling cascades involving EFG1. Also regulates gene expression during intestinal colonization but is not involved in host cell adhesion. This chain is Transcription factor CPH2 (CPH2), found in Candida albicans (strain SC5314 / ATCC MYA-2876) (Yeast).